A 195-amino-acid polypeptide reads, in one-letter code: C2 domain-containing protein DDB_G0290753 (195 aa).

One can recognise a C2 domain in the interval 38–161 (KKLTKETKFE…NIKKYSYTFK (124 aa)). Residues aspartate 72, aspartate 78, aspartate 131, aspartate 133, and aspartate 139 each contribute to the Ca(2+) site.

Ca(2+) serves as cofactor.

In Dictyostelium discoideum (Social amoeba), this protein is C2 domain-containing protein DDB_G0290753.